Consider the following 668-residue polypeptide: Methionine--tRNA ligase (668 aa).

Residues 11–21 carry the 'HIGH' region motif; sequence AYTNGPLHIGH. Cysteine 146, cysteine 149, cysteine 159, and cysteine 162 together coordinate Zn(2+). A 'KMSKS' region motif is present at residues 332-336; the sequence is KMSTS. Threonine 335 contacts ATP. The 102-residue stretch at 567–668 folds into the tRNA-binding domain; that stretch reads EFNRLDLRVG…REVEPGERIR (102 aa).

The protein belongs to the class-I aminoacyl-tRNA synthetase family. MetG type 1 subfamily. As to quaternary structure, homodimer. Zn(2+) serves as cofactor.

The protein localises to the cytoplasm. The catalysed reaction is tRNA(Met) + L-methionine + ATP = L-methionyl-tRNA(Met) + AMP + diphosphate. Its function is as follows. Is required not only for elongation of protein synthesis but also for the initiation of all mRNA translation through initiator tRNA(fMet) aminoacylation. The polypeptide is Methionine--tRNA ligase (Methanopyrus kandleri (strain AV19 / DSM 6324 / JCM 9639 / NBRC 100938)).